The sequence spans 460 residues: RING finger protein DG17 (460 aa).

Residues 27–67 (CPICFEFIYKKQIYQCKSGHHACKECWEKSLETKKECMTCK) form an RING-type zinc finger. 2 TRAF-type zinc fingers span residues 141 to 194 (SHLI…KKEL) and 196 to 253 (THYK…SELQ). Residues 269-294 (IEKLTNQVGQSKKTHDELLKKIEDLS) adopt a coiled-coil conformation. The region spanning 320 to 448 (GYRNKWIISN…DDKLIIEIYI (129 aa)) is the MATH domain.

It belongs to the TNF receptor-associated factor family. A subfamily.

The protein localises to the cytoplasm. Functionally, probable adapter protein and signal transducer that links members of the tumor necrosis factor receptor family to different signaling pathways by association with the receptor cytoplasmic domain and kinases. In Dictyostelium discoideum (Social amoeba), this protein is RING finger protein DG17 (zfaA).